Consider the following 370-residue polypeptide: Glutamate 5-kinase (370 aa).

Lys-12 contributes to the ATP binding site. 3 residues coordinate substrate: Ser-52, Asp-139, and Asn-151. ATP-binding positions include 171–172 (SD) and 213–219 (TGGMFTK). The 79-residue stretch at 278-356 (QAHIAVDAGA…SDIESILGYS (79 aa)) folds into the PUA domain.

This sequence belongs to the glutamate 5-kinase family.

The protein resides in the cytoplasm. It catalyses the reaction L-glutamate + ATP = L-glutamyl 5-phosphate + ADP. Its pathway is amino-acid biosynthesis; L-proline biosynthesis; L-glutamate 5-semialdehyde from L-glutamate: step 1/2. Its function is as follows. Catalyzes the transfer of a phosphate group to glutamate to form L-glutamate 5-phosphate. The chain is Glutamate 5-kinase from Herpetosiphon aurantiacus (strain ATCC 23779 / DSM 785 / 114-95).